Reading from the N-terminus, the 270-residue chain is Sorting nexin-11 (270 aa).

The PX domain maps to 16–132 (VITVRVQDPR…HLFLQSQLSV (117 aa)). 3 residues coordinate a 1,2-diacyl-sn-glycero-3-phospho-(1D-myo-inositol-3-phosphate): R59, K85, and R99. The tract at residues 135-139 (IEACV) is important for membrane trafficking. A compositionally biased stretch (basic and acidic residues) spans 168-177 (GSSHLAEGDQ). Disordered regions lie at residues 168–244 (GSSH…LSAS) and 251–270 (LGGG…VLEK). Residues 218-227 (LESPTLPPTS) show a composition bias toward pro residues.

Belongs to the sorting nexin family. As to quaternary structure, monomer. Interacts with TRPV3; this interaction promotes TRPV3 trafficking from the cell membrane to lysosome for degradation.

Its subcellular location is the cell membrane. It localises to the endosome. The protein resides in the cytoplasm. Functionally, phosphoinositide-binding protein involved in protein sorting and membrane trafficking in endosomes. Regulates the levels of TRPV3 by promoting its trafficking from the cell membrane to lysosome for degradation. This Bos taurus (Bovine) protein is Sorting nexin-11 (SNX11).